Here is a 139-residue protein sequence, read N- to C-terminus: CLAVATA3/ESR (CLE)-related protein 1 (139 aa).

The N-terminal stretch at 1–22 (MPNIFKILLIVLLAVVSFRLSA) is a signal peptide. Positions 23-90 (STGDKKTAND…VPSHLTNRSM (68 aa)) are required for secretion from the host cytoplasm to the host apoplasm. 2 N-linked (GlcNAc...) asparagine glycosylation sites follow: Asn37 and Asn87. The tract at residues 66 to 139 (AIGRSNAQGG…SPSGPDPHHH (74 aa)) is disordered. Residues 100 to 125 (EKGAATRVEKMRAQLRELAEKMTDKD) are a coiled coil. The segment covering 106 to 128 (RVEKMRAQLRELAEKMTDKDPKR) has biased composition (basic and acidic residues). A CLE motif is present at residues 128–139 (RLSPSGPDPHHH).

Belongs to the CLV3/ESR signal peptide family. As to expression, highly expressed exclusively within the dorsal esophageal gland cell during syncytium formation in host plants (at protein level).

It is found in the secreted. The protein localises to the host cytoplasm. The protein resides in the host extracellular space. Its subcellular location is the extracellular space. It localises to the apoplast. In terms of biological role, mimics host plant CLE extracellular signal peptides that regulate cell fate. May play a role in the differentiation or division of feeding cells (syncytia) induced in plant roots during infection. The protein is CLAVATA3/ESR (CLE)-related protein 1 (CLE1) of Heterodera glycines (Soybean cyst nematode worm).